The sequence spans 121 residues: UPF0344 protein BT9727_1053 (121 aa).

The next 4 helical transmembrane spans lie at 6–26 (ITAWALGLILFFVAYSLYSAG), 38–58 (LMYIIIIVTGFMLYMGIMKTA), 65–85 (WYGLKMIAGILVIGGMEMVLV), and 92–112 (ATGAVWGLFIVALVAVFYLGL).

The protein belongs to the UPF0344 family.

It localises to the cell membrane. This Bacillus thuringiensis subsp. konkukian (strain 97-27) protein is UPF0344 protein BT9727_1053.